The primary structure comprises 469 residues: Ribosomal protein uS12 methylthiotransferase RimO (469 aa).

The region spanning asparagine 34 to proline 144 is the MTTase N-terminal domain. [4Fe-4S] cluster-binding residues include cysteine 43, cysteine 79, cysteine 108, cysteine 176, cysteine 180, and cysteine 183. The 238-residue stretch at leucine 162 to alanine 399 folds into the Radical SAM core domain. A TRAM domain is found at glutamine 402 to arginine 468.

The protein belongs to the methylthiotransferase family. RimO subfamily. It depends on [4Fe-4S] cluster as a cofactor.

It is found in the cytoplasm. The enzyme catalyses L-aspartate(89)-[ribosomal protein uS12]-hydrogen + (sulfur carrier)-SH + AH2 + 2 S-adenosyl-L-methionine = 3-methylsulfanyl-L-aspartate(89)-[ribosomal protein uS12]-hydrogen + (sulfur carrier)-H + 5'-deoxyadenosine + L-methionine + A + S-adenosyl-L-homocysteine + 2 H(+). Functionally, catalyzes the methylthiolation of an aspartic acid residue of ribosomal protein uS12. The chain is Ribosomal protein uS12 methylthiotransferase RimO from Vibrio vulnificus (strain CMCP6).